We begin with the raw amino-acid sequence, 627 residues long: uncharacterized protein (627 aa).

Disordered regions lie at residues 57–82, 96–121, 160–184, 198–232, 247–277, 335–358, and 449–579; these read EDAM…QGED, PEAQ…APPG, GCSH…DAAY, AQSQ…CPSG, SHDA…RGAP, RQAG…EAAY, and VFDV…PPLS. Over residues 169 to 183 the composition is skewed to low complexity; sequence SSSDQAADAPAGDAA. A compositionally biased stretch (low complexity) spans 336 to 357; it reads QAGAEPAQAPATAPAPEGTEAA. Residues 450–464 show a composition bias toward basic and acidic residues; sequence FDVKEQGAHADRDAA.

This is an uncharacterized protein from Treponema pallidum (strain Nichols).